A 465-amino-acid chain; its full sequence is MDDTTSAAPEPDRLRLLRVLGPAHVWALGVGIVLVGEYMGWNFSVGKGGMIAGLMACWVAGLLYTCVAMIDSEVTSTVAAAGGQYAQAKHIVGPLMAFNVGLFLVMAYTMLEAANAITVGFLLDTVAGMQGQTGLNQQPFIVLAIMFLAWLNYRGVLATLTFNLVITAIAFLAIVALFVSVQFGASAVPLDFSAITSDPLPYGWVGIVASLHFGLWYYLGIEGTCQAAEEVRSPARSLPYGTMAGIMTLLIAATMTWYICSGLMPWEYLGQAGTPLFDAARVTGSTGLMVLLFVGTAFATLASANGCINDASRAWFSMSRDRYLPSWFGAVHPVYRTPYRAIVFLVPIALIFALGAPLDQVVTFSILSGLLGYTFMTFNMVMFRNKWPLGRIKRGYVHPFHPLPTVVLLILCSTAYFAVFLGYGTQLSAMMCFYIVASLWFHFRRYKFVRRGDQFTMPWPKPHGY.

11 helical membrane-spanning segments follow: residues 19 to 39 (VLGP…GEYM), 50 to 70 (MIAG…VAMI), 91 to 111 (IVGP…YTML), 140 to 160 (FIVL…LATL), 164 to 184 (LVIT…VQFG), 201 to 221 (PYGW…YLGI), 244 to 264 (AGIM…SGLM), 288 to 308 (LMVL…NGCI), 342 to 362 (IVFL…DQVV), 363 to 383 (TFSI…MVMF), and 403 to 423 (LPTV…FLGY).

Belongs to the amino acid-polyamine-organocation (APC) superfamily.

It localises to the cell membrane. In terms of biological role, probable amino-acid or metabolite transport protein. This is an uncharacterized protein from Rhizobium meliloti (strain 1021) (Ensifer meliloti).